The sequence spans 119 residues: Hemerythrin subunit A (119 aa).

Residues His-26, His-55, Glu-59, His-74, His-78, His-107, and Asp-112 each coordinate Fe cation.

This sequence belongs to the hemerythrin family.

Functionally, hemerythrin is a respiratory protein in blood cells of certain marine worms. The oxygen-binding site in each chain contains two iron atoms. This is Hemerythrin subunit A from Sipunculus nudus (Sipunculan worm).